Consider the following 476-residue polypeptide: Cysteine--tRNA ligase (476 aa).

Cysteine 31 is a Zn(2+) binding site. The 'HIGH' region motif lies at 33 to 43; sequence PTVYNYAHIGN. Residues cysteine 211, histidine 236, and glutamate 240 each contribute to the Zn(2+) site. A 'KMSKS' region motif is present at residues 269 to 273; the sequence is KMSKS. Position 272 (lysine 272) interacts with ATP.

The protein belongs to the class-I aminoacyl-tRNA synthetase family. In terms of assembly, monomer. The cofactor is Zn(2+).

The protein localises to the cytoplasm. The enzyme catalyses tRNA(Cys) + L-cysteine + ATP = L-cysteinyl-tRNA(Cys) + AMP + diphosphate. The protein is Cysteine--tRNA ligase of Xanthomonas oryzae pv. oryzae (strain MAFF 311018).